A 603-amino-acid chain; its full sequence is NADH-quinone oxidoreductase subunit C/D (603 aa).

The interval 1–193 (MVNNMTDLTA…DPFTLTKQKE (193 aa)) is NADH dehydrogenase I subunit C. An NADH dehydrogenase I subunit D region spans residues 217-603 (DFMFLNLGPN…IDFVMSDVDR (387 aa)).

This sequence in the N-terminal section; belongs to the complex I 30 kDa subunit family. In the C-terminal section; belongs to the complex I 49 kDa subunit family. In terms of assembly, NDH-1 is composed of 13 different subunits. Subunits NuoB, CD, E, F, and G constitute the peripheral sector of the complex.

It is found in the cell inner membrane. The enzyme catalyses a quinone + NADH + 5 H(+)(in) = a quinol + NAD(+) + 4 H(+)(out). Its function is as follows. NDH-1 shuttles electrons from NADH, via FMN and iron-sulfur (Fe-S) centers, to quinones in the respiratory chain. The immediate electron acceptor for the enzyme in this species is believed to be ubiquinone. Couples the redox reaction to proton translocation (for every two electrons transferred, four hydrogen ions are translocated across the cytoplasmic membrane), and thus conserves the redox energy in a proton gradient. This chain is NADH-quinone oxidoreductase subunit C/D, found in Cronobacter sakazakii (strain ATCC BAA-894) (Enterobacter sakazakii).